The following is a 269-amino-acid chain: Hydroxypyruvate/pyruvate aldolase (269 aa).

The Proton acceptor role is filled by H47. A divalent metal cation is bound by residues E151 and D177.

Belongs to the HpcH/HpaI aldolase family. Requires a divalent metal cation as cofactor.

The catalysed reaction is D-glyceraldehyde + 3-hydroxypyruvate = 2-dehydro-D-gluconate. It catalyses the reaction D-glyceraldehyde + 3-hydroxypyruvate = (3R,4S,5R)-3,4,5,6-tetrahydroxy-2-oxohexanoate. It carries out the reaction D-glyceraldehyde + 3-hydroxypyruvate = 2-dehydro-D-galactonate. The enzyme catalyses D-glyceraldehyde + pyruvate = 2-dehydro-3-deoxy-L-galactonate. The catalysed reaction is 2-dehydro-3-deoxy-D-gluconate = D-glyceraldehyde + pyruvate. Aldolase which can catalyze in vitro the aldolisation reaction between hydroxypyruvate (HPA) or pyruvate (PA) and D-glyceraldehyde (D-GA). The condensation of hydroxypyruvate and D-glyceraldehyde produces 2-dehydro-D-gluconate as the major product, (3R,4S,5R)-3,4,5,6-tetrahydroxy-2-oxohexanoate and 2-dehydro-D-galactonate. The condensation of pyruvate and D-glyceraldehyde produces 2-dehydro-3-deoxy-L-galactonate as the major product and 2-dehydro-3-deoxy-D-gluconate. This chain is Hydroxypyruvate/pyruvate aldolase, found in Cupriavidus necator (strain ATCC 17699 / DSM 428 / KCTC 22496 / NCIMB 10442 / H16 / Stanier 337) (Ralstonia eutropha).